A 466-amino-acid chain; its full sequence is Cysteine--tRNA ligase (466 aa).

Cysteine 28 lines the Zn(2+) pocket. Residues 30–40 (PTVYNYIHIGN) carry the 'HIGH' region motif. Zn(2+)-binding residues include cysteine 208, histidine 233, and glutamate 237. The short motif at 265–269 (KMSKS) is the 'KMSKS' region element. Lysine 268 is an ATP binding site. Serine 269 is subject to Phosphoserine.

The protein belongs to the class-I aminoacyl-tRNA synthetase family. In terms of assembly, monomer. It depends on Zn(2+) as a cofactor.

It is found in the cytoplasm. It carries out the reaction tRNA(Cys) + L-cysteine + ATP = L-cysteinyl-tRNA(Cys) + AMP + diphosphate. The protein is Cysteine--tRNA ligase of Shouchella clausii (strain KSM-K16) (Alkalihalobacillus clausii).